We begin with the raw amino-acid sequence, 273 residues long: Shikimate kinase (273 aa).

An ATP-binding site is contributed by 85-95; it reads PVGKGLKSSSA.

This sequence belongs to the GHMP kinase family. Archaeal shikimate kinase subfamily.

Its subcellular location is the cytoplasm. The catalysed reaction is shikimate + ATP = 3-phosphoshikimate + ADP + H(+). Its pathway is metabolic intermediate biosynthesis; chorismate biosynthesis; chorismate from D-erythrose 4-phosphate and phosphoenolpyruvate: step 5/7. This Pyrococcus furiosus (strain ATCC 43587 / DSM 3638 / JCM 8422 / Vc1) protein is Shikimate kinase.